A 170-amino-acid chain; its full sequence is Adenine phosphoribosyltransferase (170 aa).

It belongs to the purine/pyrimidine phosphoribosyltransferase family. In terms of assembly, homodimer.

It localises to the cytoplasm. The catalysed reaction is AMP + diphosphate = 5-phospho-alpha-D-ribose 1-diphosphate + adenine. Its pathway is purine metabolism; AMP biosynthesis via salvage pathway; AMP from adenine: step 1/1. Catalyzes a salvage reaction resulting in the formation of AMP, that is energically less costly than de novo synthesis. The sequence is that of Adenine phosphoribosyltransferase from Lactococcus lactis subsp. cremoris (strain SK11).